The sequence spans 657 residues: Zinc transporter ZIP4 (657 aa).

A signal peptide spans 1–22 (MMLPKSLTQGLLLAMLVGTAAM). The Extracellular portion of the chain corresponds to 23 to 335 (VQPYHLLSLL…QDQLSQAERY (313 aa)). N193, N220, and N268 each carry an N-linked (GlcNAc...) asparagine glycan. Residues 336–356 (LYGSLATLLICLCAVFGLLLL) traverse the membrane as a helical segment. Topologically, residues 357 to 374 (TCAKCSTATHYIMQTFLS) are cytoplasmic. A helical membrane pass occupies residues 375 to 395 (LAVGALTGDALLHLIPKVLGL). The Extracellular segment spans residues 396 to 417 (HTHSGEVHSHEEESIGGQSTWR). The helical transmembrane segment at 418–438 (LLAVLGGFYIFFLFESFFNLL) threads the bilayer. At 439–508 (LPRDQDHEKD…LRAELRMLPY (70 aa)) the chain is on the cytoplasmic side. An Essential for SLC39A4 endocytosis motif is present at residues 462–464 (LQL). Residues 467–491 (SNLRQSKQPHESSRSDLVTEETPEL) are disordered. The chain crosses the membrane as a helical span at residues 509-528 (LITLGDAVHNFADGLAVGAA). Zn(2+)-binding residues include H517, N518, and D521. Topologically, residues 529-536 (FSSTWKTG) are extracellular. Residues 537–563 (LATSLAVFCHELPHELGDFAALLHAGL) traverse the membrane as a helical segment. Zn(2+)-binding residues include H546, E547, and H550. Over 564-568 (TVKRA) the chain is Cytoplasmic. The helical transmembrane segment at 569-589 (LLLNLASALTAFAGLYVALAV) threads the bilayer. Residues 590–597 (GVGEEGET) are Extracellular-facing. The helical transmembrane segment at 598 to 618 (WILAVATGLFLYVALCDMLPA) threads the bilayer. At 619-627 (MMNVRDQRP) the chain is on the cytoplasmic side. The chain crosses the membrane as a helical span at residues 628–648 (WLLFLLHNVGLLGGWTILLLL). At 649 to 657 (SLYEDSITF) the chain is on the extracellular side.

This sequence belongs to the ZIP transporter (TC 2.A.5) family. In terms of assembly, homodimer; homodimerization is mediated by the transmembrane domain. In terms of processing, the extracellular N-terminal ectodomain is cleaved when cells are Zn(2+) deficient, N-terminally cleaved SLC39A4 is internalized at a faster rate. Under excess Zn(2+) conditions, SLC39A4 on the cell surface is rapidly endocytosed, ubiquitinated and degraded. Post-translationally, glycosylated. Expressed in duodenum, jejunum, and ileum.

It localises to the cell membrane. The protein localises to the recycling endosome membrane. It is found in the apical cell membrane. The catalysed reaction is Zn(2+)(in) = Zn(2+)(out). Its function is as follows. Selective transporter that mediates the uptake of Zn(2+). Plays an essential role for dietary zinc uptake from small intestine. The Zn(2+) uniporter activity is regulated by zinc availability. Also exhibits polyspecific binding and transport of Cu(2+), Cd(2+) and possibly Ni(2+) but at higher concentrations. In Rattus norvegicus (Rat), this protein is Zinc transporter ZIP4 (Slc39a4).